Here is a 241-residue protein sequence, read N- to C-terminus: Homeobox protein TGIF2LX (241 aa).

Disordered stretches follow at residues 1–58 (MEAA…GNLP) and 127–207 (GKGA…ELVS). Residues 10 to 39 (ETQSPVQKDSPAKTQSPAQDTSIMSRNNAD) are compositionally biased toward polar residues. A DNA-binding region (homeobox; TALE-type) is located at residues 48-111 (EHKKKRKGNL…INARRRILPD (64 aa)).

Belongs to the TALE/TGIF homeobox family.

It localises to the nucleus. Its function is as follows. May have a transcription role in testis. This Pan paniscus (Pygmy chimpanzee) protein is Homeobox protein TGIF2LX (TGIF2LX).